Reading from the N-terminus, the 302-residue chain is Sulfate adenylyltransferase subunit 2 (302 aa).

It belongs to the PAPS reductase family. CysD subfamily. As to quaternary structure, heterodimer composed of CysD, the smaller subunit, and CysN.

The enzyme catalyses sulfate + ATP + H(+) = adenosine 5'-phosphosulfate + diphosphate. Its pathway is sulfur metabolism; hydrogen sulfide biosynthesis; sulfite from sulfate: step 1/3. In terms of biological role, with CysN forms the ATP sulfurylase (ATPS) that catalyzes the adenylation of sulfate producing adenosine 5'-phosphosulfate (APS) and diphosphate, the first enzymatic step in sulfur assimilation pathway. APS synthesis involves the formation of a high-energy phosphoric-sulfuric acid anhydride bond driven by GTP hydrolysis by CysN coupled to ATP hydrolysis by CysD. The protein is Sulfate adenylyltransferase subunit 2 of Escherichia coli O1:K1 / APEC.